Here is a 261-residue protein sequence, read N- to C-terminus: Tryptophan synthase alpha chain (261 aa).

Residues Glu47 and Asp58 each act as proton acceptor in the active site.

Belongs to the TrpA family. As to quaternary structure, tetramer of two alpha and two beta chains.

It carries out the reaction (1S,2R)-1-C-(indol-3-yl)glycerol 3-phosphate + L-serine = D-glyceraldehyde 3-phosphate + L-tryptophan + H2O. It participates in amino-acid biosynthesis; L-tryptophan biosynthesis; L-tryptophan from chorismate: step 5/5. The alpha subunit is responsible for the aldol cleavage of indoleglycerol phosphate to indole and glyceraldehyde 3-phosphate. This Neisseria gonorrhoeae (strain ATCC 700825 / FA 1090) protein is Tryptophan synthase alpha chain.